We begin with the raw amino-acid sequence, 473 residues long: Inactive pancreatic lipase-related protein 1 (473 aa).

An N-terminal signal peptide occupies residues 1–17 (MLILWTIPLFLLGAAQG). Disulfide bonds link Cys21/Cys27 and Cys109/Cys120. Residue Ser171 is the Nucleophile of the active site. Residue Asp194 is the Charge relay system of the active site. The Ca(2+) site is built by Glu205, Arg208, Asp210, and Asp213. Cysteines 255 and 279 form a disulfide. Residue His281 is the Charge relay system of the active site. 3 cysteine pairs are disulfide-bonded: Cys303/Cys314, Cys317/Cys322, and Cys451/Cys467. Positions 356 to 467 (WRYRVSLTFS…EDILLTLLPC (112 aa)) constitute a PLAT domain.

Belongs to the AB hydrolase superfamily. Lipase family. Expressed in female, but not in male, lacrimal gland. Expressed in male and female sublingual gland and pancreas.

It is found in the secreted. Functionally, may function as inhibitor of dietary triglyceride digestion. Lacks detectable lipase activity (in vitro). This Mus musculus (Mouse) protein is Inactive pancreatic lipase-related protein 1 (Pnliprp1).